The following is a 563-amino-acid chain: Arginine--tRNA ligase (563 aa).

A 'HIGH' region motif is present at residues 121–131 (PNIAKPFSIGH).

It belongs to the class-I aminoacyl-tRNA synthetase family. In terms of assembly, monomer.

It is found in the cytoplasm. The catalysed reaction is tRNA(Arg) + L-arginine + ATP = L-arginyl-tRNA(Arg) + AMP + diphosphate. This Streptococcus thermophilus (strain CNRZ 1066) protein is Arginine--tRNA ligase.